Here is a 146-residue protein sequence, read N- to C-terminus: Ribonuclease H (146 aa).

Positions 1-143 (MKEIIIYTDG…CDQLARNAIK (143 aa)) constitute an RNase H type-1 domain. D9, E47, D70, and D135 together coordinate Mg(2+).

This sequence belongs to the RNase H family. As to quaternary structure, monomer. Mg(2+) serves as cofactor.

Its subcellular location is the cytoplasm. The catalysed reaction is Endonucleolytic cleavage to 5'-phosphomonoester.. Functionally, endonuclease that specifically degrades the RNA of RNA-DNA hybrids. This chain is Ribonuclease H, found in Syntrophomonas wolfei subsp. wolfei (strain DSM 2245B / Goettingen).